The chain runs to 437 residues: Photosystem II stability/assembly factor HCF136, chloroplastic (437 aa).

This sequence belongs to the Ycf48 family.

Its subcellular location is the plastid. It is found in the chloroplast thylakoid membrane. In terms of biological role, essential for photosystem II (PSII) biogenesis; required for assembly of an early intermediate in PSII assembly that includes D2 (psbD) and cytochrome b559. This Cyanidioschyzon merolae (strain NIES-3377 / 10D) (Unicellular red alga) protein is Photosystem II stability/assembly factor HCF136, chloroplastic.